The following is a 195-amino-acid chain: Endoribonuclease YbeY (195 aa).

3 residues coordinate Zn(2+): His152, His156, and His162.

The protein belongs to the endoribonuclease YbeY family. It depends on Zn(2+) as a cofactor.

It is found in the cytoplasm. In terms of biological role, single strand-specific metallo-endoribonuclease involved in late-stage 70S ribosome quality control and in maturation of the 3' terminus of the 16S rRNA. This is Endoribonuclease YbeY from Rhodopseudomonas palustris (strain BisB5).